A 147-amino-acid chain; its full sequence is Large ribosomal subunit protein uL13 (147 aa).

The interval P128–Q147 is disordered.

This sequence belongs to the universal ribosomal protein uL13 family. In terms of assembly, part of the 50S ribosomal subunit.

In terms of biological role, this protein is one of the early assembly proteins of the 50S ribosomal subunit, although it is not seen to bind rRNA by itself. It is important during the early stages of 50S assembly. The chain is Large ribosomal subunit protein uL13 from Mycobacterium bovis (strain BCG / Pasteur 1173P2).